The chain runs to 273 residues: Type III pantothenate kinase (273 aa).

7–14 is an ATP binding site; it reads DVGNTAIK. Substrate contacts are provided by residues phenylalanine 119 and 124-127; that span reads GIDR. The Proton acceptor role is filled by aspartate 126. A K(+)-binding site is contributed by aspartate 146. Threonine 149 contacts ATP. Threonine 206 serves as a coordination point for substrate.

It belongs to the type III pantothenate kinase family. As to quaternary structure, homodimer. The cofactor is NH4(+). It depends on K(+) as a cofactor.

Its subcellular location is the cytoplasm. The enzyme catalyses (R)-pantothenate + ATP = (R)-4'-phosphopantothenate + ADP + H(+). It functions in the pathway cofactor biosynthesis; coenzyme A biosynthesis; CoA from (R)-pantothenate: step 1/5. Functionally, catalyzes the phosphorylation of pantothenate (Pan), the first step in CoA biosynthesis. This chain is Type III pantothenate kinase, found in Rhodopirellula baltica (strain DSM 10527 / NCIMB 13988 / SH1).